The primary structure comprises 61 residues: Photosystem II reaction center protein K (61 aa).

The propeptide occupies 1 to 24; that stretch reads MLNIFSLISICLNSALYSSSFFFG. A helical membrane pass occupies residues 40–60; the sequence is MPVIPVFFFLLAFVWQAAVSF.

The protein belongs to the PsbK family. In terms of assembly, PSII is composed of 1 copy each of membrane proteins PsbA, PsbB, PsbC, PsbD, PsbE, PsbF, PsbH, PsbI, PsbJ, PsbK, PsbL, PsbM, PsbT, PsbX, PsbY, PsbZ, Psb30/Ycf12, at least 3 peripheral proteins of the oxygen-evolving complex and a large number of cofactors. It forms dimeric complexes.

Its subcellular location is the plastid. The protein localises to the chloroplast thylakoid membrane. Functionally, one of the components of the core complex of photosystem II (PSII). PSII is a light-driven water:plastoquinone oxidoreductase that uses light energy to abstract electrons from H(2)O, generating O(2) and a proton gradient subsequently used for ATP formation. It consists of a core antenna complex that captures photons, and an electron transfer chain that converts photonic excitation into a charge separation. The sequence is that of Photosystem II reaction center protein K from Jasminum nudiflorum (Winter jasmine).